We begin with the raw amino-acid sequence, 728 residues long: Hepatocyte growth factor (728 aa).

Residues 1–32 (MMWGTKLLPVLLLQHVLLHLLLLPVTIPYAEG) form the signal peptide. Gln-33 carries the post-translational modification Pyrrolidone carboxylic acid. One can recognise a PAN domain in the interval 38–124 (NTLHEFKKSA…HEFDLYENKD (87 aa)). 8 cysteine pairs are disulfide-bonded: Cys-71-Cys-97, Cys-75-Cys-85, Cys-129-Cys-207, Cys-150-Cys-190, Cys-178-Cys-202, Cys-212-Cys-289, Cys-233-Cys-272, and Cys-261-Cys-284. Kringle domains lie at 129–207 (CIIG…IPQC) and 212–289 (CMTC…IKMC). Asn-295 is a glycosylation site (N-linked (GlcNAc...) asparagine). Intrachain disulfides connect Cys-306–Cys-384, Cys-327–Cys-366, Cys-355–Cys-378, Cys-392–Cys-470, Cys-413–Cys-453, Cys-441–Cys-465, Cys-488–Cys-607, Cys-520–Cys-536, Cys-615–Cys-682, Cys-645–Cys-661, and Cys-672–Cys-700. 2 consecutive Kringle domains span residues 306–384 (CIKG…IPKC) and 392–470 (CYRG…ISRC). An N-linked (GlcNAc...) asparagine glycan is attached at Asn-403. The Peptidase S1 domain occupies 496–724 (VVNGIPTQTT…YAKWIHKVIL (229 aa)). Residues Asn-569 and Asn-656 are each glycosylated (N-linked (GlcNAc...) asparagine).

The protein belongs to the peptidase S1 family. Plasminogen subfamily. As to quaternary structure, dimer of an alpha chain and a beta chain linked by a disulfide bond. Interacts with SRPX2; the interaction increases HGF mitogenic activity. The single-chain precursor undergoes proteolytic processing by TMPRSS13 resulting in an active two-chain form. The single-chain precursor undergoes proteolytic processing by HGFAC resulting in an active two-chain form.

Its function is as follows. Potent mitogen for mature parenchymal hepatocyte cells, seems to be a hepatotrophic factor, and acts as a growth factor for a broad spectrum of tissues and cell types. Activating ligand for the receptor tyrosine kinase MET by binding to it and promoting its dimerization. Activates MAPK signaling following TMPRSS13 cleavage and activation. This Rattus norvegicus (Rat) protein is Hepatocyte growth factor (Hgf).